We begin with the raw amino-acid sequence, 391 residues long: Phosphoglycerate kinase (391 aa).

Substrate contacts are provided by residues 21-23 (DLN), Arg-36, 59-62 (HLGR), Arg-113, and Arg-146. ATP is bound by residues Lys-197, Glu-319, and 345 to 348 (GGDT).

The protein belongs to the phosphoglycerate kinase family. As to quaternary structure, monomer.

It localises to the cytoplasm. It catalyses the reaction (2R)-3-phosphoglycerate + ATP = (2R)-3-phospho-glyceroyl phosphate + ADP. Its pathway is carbohydrate degradation; glycolysis; pyruvate from D-glyceraldehyde 3-phosphate: step 2/5. This is Phosphoglycerate kinase from Shewanella halifaxensis (strain HAW-EB4).